The chain runs to 419 residues: L-rhamnose isomerase (419 aa).

Residues H262, D294, and D296 each contribute to the Mn(2+) site.

The protein belongs to the rhamnose isomerase family. As to quaternary structure, homotetramer. It depends on Mn(2+) as a cofactor.

The protein resides in the cytoplasm. The catalysed reaction is L-rhamnopyranose = L-rhamnulose. Its pathway is carbohydrate degradation; L-rhamnose degradation; glycerone phosphate from L-rhamnose: step 1/3. Functionally, catalyzes the interconversion of L-rhamnose and L-rhamnulose. The polypeptide is L-rhamnose isomerase (Escherichia coli O127:H6 (strain E2348/69 / EPEC)).